The following is a 229-amino-acid chain: 7-cyano-7-deazaguanine synthase (229 aa).

9–19 is an ATP binding site; the sequence is LSGGLDSATVL. Zn(2+) contacts are provided by Cys188, Cys198, Cys201, and Cys204.

This sequence belongs to the QueC family. Zn(2+) is required as a cofactor.

The catalysed reaction is 7-carboxy-7-deazaguanine + NH4(+) + ATP = 7-cyano-7-deazaguanine + ADP + phosphate + H2O + H(+). It functions in the pathway purine metabolism; 7-cyano-7-deazaguanine biosynthesis. Catalyzes the ATP-dependent conversion of 7-carboxy-7-deazaguanine (CDG) to 7-cyano-7-deazaguanine (preQ(0)). This Methylobacillus flagellatus (strain ATCC 51484 / DSM 6875 / VKM B-1610 / KT) protein is 7-cyano-7-deazaguanine synthase.